We begin with the raw amino-acid sequence, 224 residues long: Deoxyribose-phosphate aldolase (224 aa).

The active-site Proton donor/acceptor is aspartate 92. Lysine 155 functions as the Schiff-base intermediate with acetaldehyde in the catalytic mechanism. Catalysis depends on lysine 184, which acts as the Proton donor/acceptor.

The protein belongs to the DeoC/FbaB aldolase family. DeoC type 1 subfamily.

It localises to the cytoplasm. The enzyme catalyses 2-deoxy-D-ribose 5-phosphate = D-glyceraldehyde 3-phosphate + acetaldehyde. Its pathway is carbohydrate degradation; 2-deoxy-D-ribose 1-phosphate degradation; D-glyceraldehyde 3-phosphate and acetaldehyde from 2-deoxy-alpha-D-ribose 1-phosphate: step 2/2. Catalyzes a reversible aldol reaction between acetaldehyde and D-glyceraldehyde 3-phosphate to generate 2-deoxy-D-ribose 5-phosphate. This Clostridium perfringens (strain ATCC 13124 / DSM 756 / JCM 1290 / NCIMB 6125 / NCTC 8237 / Type A) protein is Deoxyribose-phosphate aldolase.